The primary structure comprises 198 residues: Glycerol-3-phosphate acyltransferase 2 (198 aa).

4 consecutive transmembrane segments (helical) span residues 4–24, 71–91, 113–133, and 147–167; these read TYLL…LVVG, LPMV…AVLG, LLCY…TLLF, and VVAV…AMCL.

Belongs to the PlsY family. Probably interacts with PlsX.

Its subcellular location is the cell membrane. It catalyses the reaction an acyl phosphate + sn-glycerol 3-phosphate = a 1-acyl-sn-glycero-3-phosphate + phosphate. The protein operates within lipid metabolism; phospholipid metabolism. In terms of biological role, catalyzes the transfer of an acyl group from acyl-phosphate (acyl-PO(4)) to glycerol-3-phosphate (G3P) to form lysophosphatidic acid (LPA). This enzyme utilizes acyl-phosphate as fatty acyl donor, but not acyl-CoA or acyl-ACP. The sequence is that of Glycerol-3-phosphate acyltransferase 2 from Bacillus cereus (strain ZK / E33L).